An 806-amino-acid polypeptide reads, in one-letter code: Phenylalanine--tRNA ligase beta subunit (806 aa).

Positions 40-153 (FNSPDYLQLA…ADAIIIDHVS (114 aa)) constitute a tRNA-binding domain. Residues 413–487 (PFSKKLTVNF…KLIDINKLKP (75 aa)) enclose the B5 domain. Mg(2+)-binding residues include D465, D471, E474, and E475.

It belongs to the phenylalanyl-tRNA synthetase beta subunit family. Type 1 subfamily. In terms of assembly, tetramer of two alpha and two beta subunits. Mg(2+) is required as a cofactor.

The protein localises to the cytoplasm. The catalysed reaction is tRNA(Phe) + L-phenylalanine + ATP = L-phenylalanyl-tRNA(Phe) + AMP + diphosphate + H(+). This chain is Phenylalanine--tRNA ligase beta subunit (pheT), found in Mycoplasma genitalium (strain ATCC 33530 / DSM 19775 / NCTC 10195 / G37) (Mycoplasmoides genitalium).